The primary structure comprises 341 residues: ATPase GET3 (341 aa).

Lys34–Thr41 is an ATP binding site. Asp63 is an active-site residue. ATP is bound by residues Glu245 and Asn272. 2 residues coordinate Zn(2+): Cys283 and Cys286.

This sequence belongs to the arsA ATPase family. In terms of assembly, homodimer.

The protein resides in the cytoplasm. It is found in the endoplasmic reticulum. Its function is as follows. ATPase required for the post-translational delivery of tail-anchored (TA) proteins to the endoplasmic reticulum. Recognizes and selectively binds the transmembrane domain of TA proteins in the cytosol. This complex then targets to the endoplasmic reticulum by membrane-bound receptors, where the tail-anchored protein is released for insertion. This process is regulated by ATP binding and hydrolysis. ATP binding drives the homodimer towards the closed dimer state, facilitating recognition of newly synthesized TA membrane proteins. ATP hydrolysis is required for insertion. Subsequently, the homodimer reverts towards the open dimer state, lowering its affinity for the membrane-bound receptor, and returning it to the cytosol to initiate a new round of targeting. The protein is ATPase GET3 of Paracoccidioides lutzii (strain ATCC MYA-826 / Pb01) (Paracoccidioides brasiliensis).